Here is a 587-residue protein sequence, read N- to C-terminus: Hatching enzyme (587 aa).

The first 18 residues, 1–18, serve as a signal peptide directing secretion; that stretch reads MANSGLILLVMFMIHVTT. The propeptide at 19 to 166 is activation peptide; the sequence is VHNVPLPSTA…PRCGVPDVLP (148 aa). Residues Asn-64, Asn-126, and Asn-141 are each glycosylated (N-linked (GlcNAc...) asparagine). The short motif at 157 to 164 is the Cysteine switch element; sequence PRCGVPDV. 2 residues coordinate Zn(2+): Cys-159 and His-283. Glu-284 is an active-site residue. Zn(2+) contacts are provided by His-287 and His-293. A disordered region spans residues 325-382; it reads LYGSNSGSGTTTTTRRPTTTRATTTRRTTTTRATTTRATTTTTTSPSRPSPPRRACSG. Over residues 334-371 the composition is skewed to low complexity; that stretch reads TTTTTRRPTTTRATTTRRTTTTRATTTRATTTTTTSPS. An intrachain disulfide couples Cys-380 to Cys-582. 4 Hemopexin repeats span residues 381–422, 425–468, 469–513, and 518–570; these read SGSF…RFGF, PQNI…WVGL, PCNI…FNDV, and HDGV…IPQC. A glycan (N-linked (GlcNAc...) asparagine) is linked at Asn-584.

The protein belongs to the peptidase M10A family. Requires Zn(2+) as cofactor.

It carries out the reaction Hydrolysis of proteins of the fertilization envelope and dimethylcasein.. Allows the sea urchin to digest the protective envelope derived from the egg extracellular matrix; thus allowing the sea urchin to swim freely. This is Hatching enzyme from Paracentrotus lividus (Common sea urchin).